We begin with the raw amino-acid sequence, 659 residues long: MAKETFYITTPIYYPSGNLHIGHAYSTVAGDVISRYKRMQGYDVRYLTGTDEHGQKIQEKAQKAGKTELEYLDEMISGIKSLWSKLEISNDDFIRTTEDRHKQVVEKVFERLLKQGDIYLGEYEGWYSVPDETYYTESQLVDPIYENGKIVGGKSPDSGHEVELVKEESYFFNINKYTDRLLEFYDANPDFIQPPSRKNEMINNFIKPGLEDLAVSRTSFDWGVRVPSNPKHVVYVWIDALVNYISALGYLSDDDELFQKYWPADVHLMAKEIVRFHSIIWPILLMALDLPLPKKVFAHGWILMKDGKMSKSKGNVVDPNVLIDRYGLDATRYYLMRELPFGSDGVFTPEAFVERTNYDLANDLGNLVNRTISMINKYFQGELPAYEGPKHELDEDMEALAHETVKHFNESMESFQFSVALSTVWKFISRTNKYIDETTPWVLAKDDSQKDMLGNVMAHLVENIRFAAVLLRPFLTHAPKEIFKQLNINEPELFELESLEQYGALKQPIMVTEKPTPIFPRLDTEAEIAYIKESMQPPKSEESKDEVEEPSKAQIDIKDFDKVEIKAATITDAENVPKSDKLLKIQIDLGLEQRQIVSGIAKFYRPEDIIGKKVAVVTNLKPAKLMGQKSEGMILSAEKDGVLTLVSLPSAIPNGAVIK.

The 'HIGH' region motif lies at 13 to 23 (YYPSGNLHIGH). The 'KMSKS' region signature appears at 308–312 (KMSKS). K311 serves as a coordination point for ATP. The 101-residue stretch at 559–659 (DFDKVEIKAA…SAIPNGAVIK (101 aa)) folds into the tRNA-binding domain.

Belongs to the class-I aminoacyl-tRNA synthetase family. MetG type 2B subfamily. In terms of assembly, homodimer.

The protein localises to the cytoplasm. It carries out the reaction tRNA(Met) + L-methionine + ATP = L-methionyl-tRNA(Met) + AMP + diphosphate. Functionally, is required not only for elongation of protein synthesis but also for the initiation of all mRNA translation through initiator tRNA(fMet) aminoacylation. This Staphylococcus haemolyticus (strain JCSC1435) protein is Methionine--tRNA ligase.